Here is a 265-residue protein sequence, read N- to C-terminus: Phosphatidylglycerol--prolipoprotein diacylglyceryl transferase (265 aa).

7 helical membrane passes run 17 to 37 (VAVRWYGLMYLLAFVLFVVLG), 57 to 77 (LLLYGVLGVIIGGRLGEVLFY), 89 to 109 (ILAVWKGGMSFHGGFLGVLVA), 127 to 147 (FIAPLVPTGLAAGRIGNFING), 176 to 196 (QLYQAAGEGLLLFAIVWVFAA), 201 to 218 (LRAVSAVFLIGYGSLRFV), and 233 to 253 (LVPGLSTAQWLCVPMVVVGLA). Arg-140 provides a ligand contact to a 1,2-diacyl-sn-glycero-3-phospho-(1'-sn-glycerol).

This sequence belongs to the Lgt family.

It localises to the cell inner membrane. It carries out the reaction L-cysteinyl-[prolipoprotein] + a 1,2-diacyl-sn-glycero-3-phospho-(1'-sn-glycerol) = an S-1,2-diacyl-sn-glyceryl-L-cysteinyl-[prolipoprotein] + sn-glycerol 1-phosphate + H(+). Its pathway is protein modification; lipoprotein biosynthesis (diacylglyceryl transfer). Functionally, catalyzes the transfer of the diacylglyceryl group from phosphatidylglycerol to the sulfhydryl group of the N-terminal cysteine of a prolipoprotein, the first step in the formation of mature lipoproteins. The protein is Phosphatidylglycerol--prolipoprotein diacylglyceryl transferase of Azoarcus sp. (strain BH72).